A 421-amino-acid chain; its full sequence is Extracellular signal-regulated kinase 1 (421 aa).

The Protein kinase domain maps to 70–375; that stretch reads YQILEIVGEG…VEDALKHPYL (306 aa). Residues 76–84 and Lys-99 each bind ATP; that span reads VGEGAYGIV. Asp-194 acts as the Proton acceptor in catalysis. Thr-230 is subject to Phosphothreonine. Residues 230–232 carry the TXY motif; that stretch reads TEY. At Tyr-232 the chain carries Phosphotyrosine.

Belongs to the protein kinase superfamily. CMGC Ser/Thr protein kinase family. MAP kinase subfamily. It depends on Mg(2+) as a cofactor. Post-translationally, dually phosphorylated on Thr-230 and Tyr-232, which activates the enzyme.

It catalyses the reaction L-seryl-[protein] + ATP = O-phospho-L-seryl-[protein] + ADP + H(+). The catalysed reaction is L-threonyl-[protein] + ATP = O-phospho-L-threonyl-[protein] + ADP + H(+). With respect to regulation, activated by tyrosine and threonine phosphorylation. This Candida albicans (strain SC5314 / ATCC MYA-2876) (Yeast) protein is Extracellular signal-regulated kinase 1 (CEK1).